A 324-amino-acid polypeptide reads, in one-letter code: Palmitoyltransferase SWF1 (324 aa).

A topological domain (lumenal) is located at residue Met-1. A helical transmembrane segment spans residues 2–22; the sequence is FLLFLLFVVSQVGLLVFSPKF. Residues 23–49 are Cytoplasmic-facing; the sequence is KDLILFRWYYQHIYYPLFTDYTRYRWK. A helical membrane pass occupies residues 50-70; that stretch reads YWLVPGFYACILIFCVHLFYN. Topologically, residues 71-84 are lumenal; it reads KLNDTVNPYLYSLE. Residues 85–105 form a helical membrane-spanning segment; the sequence is KAFIPITIAFTSLTGVASVFV. At 106 to 173 the chain is on the cytoplasmic side; it reads KPLGLQAGPQ…VGYGNYEYFY (68 aa). Positions 127 to 177 constitute a DHHC domain; that stretch reads AVCQTCKTIKVPRSKHCPICERCIPLHDHHCIWINNCVGYGNYEYFYSFLL. Residues 174–194 traverse the membrane as a helical segment; the sequence is SFLLSNCLLLTYASLRLLTLF. The Lumenal portion of the chain corresponds to 195–203; it reads RITAFKKDK. The helical transmembrane segment at 204–224 threads the bilayer; it reads FFLSLFLLTTAFSLIAIVFTY. Topologically, residues 225 to 324 are cytoplasmic; the sequence is YQLKLVNDGM…NLKERIHLLD (100 aa).

This sequence belongs to the DHHC palmitoyltransferase family. SWF1 subfamily.

It is found in the endoplasmic reticulum membrane. The enzyme catalyses L-cysteinyl-[protein] + hexadecanoyl-CoA = S-hexadecanoyl-L-cysteinyl-[protein] + CoA. Its function is as follows. Palmitoyltransferase that targets several endosomal SNAREs. Palmitoylates the SNAREs at cysteine residues close to the cytoplasmic end of their transmembrane domain. May have a role in the cellular quality control of transmembrane domain-containing proteins. The protein is Palmitoyltransferase SWF1 (SWF1) of Kluyveromyces lactis (strain ATCC 8585 / CBS 2359 / DSM 70799 / NBRC 1267 / NRRL Y-1140 / WM37) (Yeast).